The sequence spans 329 residues: 3-isopropylmalate dehydrogenase (329 aa).

The substrate site is built by Arg-83, Arg-93, Arg-114, and Asp-200. Residues Asp-200, Asp-224, and Asp-228 each coordinate Mg(2+). Residue 257 to 269 (GSAPQIAGKNIAN) coordinates NAD(+).

The protein belongs to the isocitrate and isopropylmalate dehydrogenases family. In terms of assembly, homotetramer. Requires Mg(2+) as cofactor. It depends on Mn(2+) as a cofactor.

The protein localises to the cytoplasm. It carries out the reaction (2R,3S)-3-isopropylmalate + NAD(+) = 4-methyl-2-oxopentanoate + CO2 + NADH. The protein operates within amino-acid biosynthesis; L-leucine biosynthesis; L-leucine from 3-methyl-2-oxobutanoate: step 3/4. In terms of biological role, catalyzes the oxidation of 3-carboxy-2-hydroxy-4-methylpentanoate (3-isopropylmalate) to 3-carboxy-4-methyl-2-oxopentanoate. The product decarboxylates to 4-methyl-2 oxopentanoate. This is 3-isopropylmalate dehydrogenase (leuB) from Methanothermobacter thermautotrophicus (strain ATCC 29096 / DSM 1053 / JCM 10044 / NBRC 100330 / Delta H) (Methanobacterium thermoautotrophicum).